A 251-amino-acid chain; its full sequence is Phosphoribosylaminoimidazole-succinocarboxamide synthase (251 aa).

The protein belongs to the SAICAR synthetase family.

The enzyme catalyses 5-amino-1-(5-phospho-D-ribosyl)imidazole-4-carboxylate + L-aspartate + ATP = (2S)-2-[5-amino-1-(5-phospho-beta-D-ribosyl)imidazole-4-carboxamido]succinate + ADP + phosphate + 2 H(+). Its pathway is purine metabolism; IMP biosynthesis via de novo pathway; 5-amino-1-(5-phospho-D-ribosyl)imidazole-4-carboxamide from 5-amino-1-(5-phospho-D-ribosyl)imidazole-4-carboxylate: step 1/2. The protein is Phosphoribosylaminoimidazole-succinocarboxamide synthase of Ruegeria pomeroyi (strain ATCC 700808 / DSM 15171 / DSS-3) (Silicibacter pomeroyi).